The sequence spans 573 residues: Proline--tRNA ligase (573 aa).

Belongs to the class-II aminoacyl-tRNA synthetase family. ProS type 1 subfamily. Homodimer.

It is found in the cytoplasm. It carries out the reaction tRNA(Pro) + L-proline + ATP = L-prolyl-tRNA(Pro) + AMP + diphosphate. Catalyzes the attachment of proline to tRNA(Pro) in a two-step reaction: proline is first activated by ATP to form Pro-AMP and then transferred to the acceptor end of tRNA(Pro). As ProRS can inadvertently accommodate and process non-cognate amino acids such as alanine and cysteine, to avoid such errors it has two additional distinct editing activities against alanine. One activity is designated as 'pretransfer' editing and involves the tRNA(Pro)-independent hydrolysis of activated Ala-AMP. The other activity is designated 'posttransfer' editing and involves deacylation of mischarged Ala-tRNA(Pro). The misacylated Cys-tRNA(Pro) is not edited by ProRS. The sequence is that of Proline--tRNA ligase from Elusimicrobium minutum (strain Pei191).